The sequence spans 131 residues: uncharacterized protein (131 aa).

Residues 8–124 (DILVVDDDPD…ELIRLVQQYC (117 aa)) enclose the Response regulatory domain. At aspartate 57 the chain carries 4-aspartylphosphate.

This is an uncharacterized protein from Leptolyngbya boryana (Plectonema boryanum).